Here is a 187-residue protein sequence, read N- to C-terminus: CASP-like protein 2C1 (187 aa).

The Cytoplasmic segment spans residues 1–14 (MVAAARVVSGVKAE). The helical transmembrane segment at 15 to 35 (GLLRGACAALAAAAALLLGLS) threads the bilayer. Residues 36–54 (TQTETVLLVRKKGTVKDVQ) are Extracellular-facing. A helical membrane pass occupies residues 55-75 (ALWVLAMAAASAAGYHLLQLL). Over 76–97 (KCLYLGRGGGRALAWTCLLLDK) the chain is Cytoplasmic. A helical transmembrane segment spans residues 98–118 (ACAYATFATTVAAAQACVVAL). Residues 119–139 (DGAHALQWTKLCNIYTRFCEQ) are Extracellular-facing. Residues 140–160 (VAGSLVLGMLAAVGTAVLSAA) traverse the membrane as a helical segment. The Cytoplasmic segment spans residues 161 to 187 (SARNVFRHYYCSSHSPPAPPPETCDAH).

This sequence belongs to the Casparian strip membrane proteins (CASP) family. In terms of assembly, homodimer and heterodimers.

The protein localises to the cell membrane. This Zea mays (Maize) protein is CASP-like protein 2C1.